A 296-amino-acid chain; its full sequence is Glucokinase (296 aa).

The protein belongs to the ROK (NagC/XylR) family. In terms of assembly, homodimer. A divalent metal cation serves as cofactor.

It catalyses the reaction D-glucose + ATP = D-glucose 6-phosphate + ADP + H(+). Catalyzes the phosphorylation of D-glucose to D-glucose 6-phosphate using ATP as the phosphate donor. Has a broad hexose specificity, and in addition to glucose, which shows the highest catalytic efficiency, it can also phosphorylate fructose, mannose, galactose and sorbitol. Can also use CTP, GTP or UTP as phosphoryl donor. The polypeptide is Glucokinase (Pyrobaculum calidifontis (strain DSM 21063 / JCM 11548 / VA1)).